The following is a 444-amino-acid chain: MTRKYFGTDGIRGTVGQSPITPDFALRLAHAVGRVLRRTQERPTVLIGKDTRISGYMLESALESGFNSAGVDVVLLGPLPTPGVAYLTRAQRASLGVVISASHNPYPDNGIKFFSAQGTKLPDAWEEEVEAALEQPPVWADSASLGKTRRLDDAAGRYIEFCKSTFANDLTLRGLKIVVDAAHGAAYHIAPKVFHELGAEVLAIGCAPDGLNINHQVGATHPDALVRAVRANHADYGIALDGDADRVQMVDAAGRLFNGDELLYVMVAARLARDEHVPGVVGTLMTNMAVEEALQRRGVKFMRAKVGDRYVLEELQRQHWLLGGEGSGHLLALDRHTTGDGLISALQVLQACVRSGKTLAQLLADVPLFPQVLLNVRLNPGQDWKTNPVLADAIRDAEAELGAHGRVLVRASGTEPLLRVMVEAREAEQANRCAQRIADAARAG.

Serine 102 (phosphoserine intermediate) is an active-site residue. 4 residues coordinate Mg(2+): serine 102, aspartate 241, aspartate 243, and aspartate 245. Serine 102 bears the Phosphoserine mark.

Belongs to the phosphohexose mutase family. Mg(2+) serves as cofactor. In terms of processing, activated by phosphorylation.

The enzyme catalyses alpha-D-glucosamine 1-phosphate = D-glucosamine 6-phosphate. Catalyzes the conversion of glucosamine-6-phosphate to glucosamine-1-phosphate. The sequence is that of Phosphoglucosamine mutase from Acidovorax ebreus (strain TPSY) (Diaphorobacter sp. (strain TPSY)).